Here is an 87-residue protein sequence, read N- to C-terminus: Phosphoribosyl-ATP pyrophosphatase (87 aa).

This sequence belongs to the PRA-PH family.

It is found in the cytoplasm. The enzyme catalyses 1-(5-phospho-beta-D-ribosyl)-ATP + H2O = 1-(5-phospho-beta-D-ribosyl)-5'-AMP + diphosphate + H(+). It participates in amino-acid biosynthesis; L-histidine biosynthesis; L-histidine from 5-phospho-alpha-D-ribose 1-diphosphate: step 2/9. This is Phosphoribosyl-ATP pyrophosphatase from Saccharopolyspora erythraea (strain ATCC 11635 / DSM 40517 / JCM 4748 / NBRC 13426 / NCIMB 8594 / NRRL 2338).